Here is a 209-residue protein sequence, read N- to C-terminus: Uracil phosphoribosyltransferase (209 aa).

5-phospho-alpha-D-ribose 1-diphosphate contacts are provided by residues Arg-79, Arg-104, and 131 to 139 (DPMLATGAS). Residues Ile-194 and 199 to 201 (GDA) each bind uracil. Asp-200 contacts 5-phospho-alpha-D-ribose 1-diphosphate.

The protein belongs to the UPRTase family. The cofactor is Mg(2+).

It carries out the reaction UMP + diphosphate = 5-phospho-alpha-D-ribose 1-diphosphate + uracil. Its pathway is pyrimidine metabolism; UMP biosynthesis via salvage pathway; UMP from uracil: step 1/1. Its activity is regulated as follows. Allosterically activated by GTP. Functionally, catalyzes the conversion of uracil and 5-phospho-alpha-D-ribose 1-diphosphate (PRPP) to UMP and diphosphate. The chain is Uracil phosphoribosyltransferase from Staphylococcus haemolyticus (strain JCSC1435).